A 298-amino-acid chain; its full sequence is Cholesterol 25-hydroxylase (298 aa).

Asn-5 carries N-linked (GlcNAc...) asparagine glycosylation. 3 consecutive transmembrane segments (helical) span residues 38 to 58, 88 to 108, and 124 to 144; these read IFPV…FVVL, LGLT…LHWV, and LLSH…AWHL. The Fatty acid hydroxylase domain maps to 128–263; that stretch reads VLICLLLFDT…FTHWDKMLGT (136 aa). Residues 142-146 carry the Histidine box-1 motif; it reads WHLLH. Positions 157 to 161 match the Histidine box-2 motif; the sequence is HKVHH. Residue Asn-163 is glycosylated (N-linked (GlcNAc...) asparagine). A Histidine box-3 motif is present at residues 238–244; sequence HHDMHHS.

It belongs to the sterol desaturase family. Requires Fe cation as cofactor. Post-translationally, N-glycosylated. In terms of tissue distribution, widely expressed at low level and at higher level in the lung. Weakly expressed in the heart, lung and kidney.

The protein localises to the endoplasmic reticulum membrane. It catalyses the reaction cholesterol + AH2 + O2 = 25-hydroxycholesterol + A + H2O. It carries out the reaction cholesterol + NADPH + O2 + H(+) = 25-hydroxycholesterol + NADP(+) + H2O. Catalyzes the formation of 25-hydroxycholesterol from cholesterol, leading to repress cholesterol biosynthetic enzymes. Plays a key role in cell positioning and movement in lymphoid tissues: 25-hydroxycholesterol is an intermediate in biosynthesis of 7-alpha,25-dihydroxycholesterol (7-alpha,25-OHC), an oxysterol that acts as a ligand for the G protein-coupled receptor GPR183/EBI2, a chemotactic receptor for a number of lymphoid cells. May play an important role in regulating lipid metabolism by synthesizing a corepressor that blocks sterol regulatory element binding protein (SREBP) processing. In testis, production of 25-hydroxycholesterol by macrophages may play a role in Leydig cell differentiation. Required to restrain inflammation in macrophages: production of 25-hydroxycholesterol protects macrophages from cholesterol overload, thereby preventing mitochondrial DNA release and subsequent activation of the AIM2 inflammasome. Interferon-stimulated gene which has broad antiviral activities against a wide range of enveloped viruses. The protein is Cholesterol 25-hydroxylase of Mus musculus (Mouse).